The chain runs to 285 residues: NADH-cytochrome b5 reductase 1 (285 aa).

A helical membrane pass occupies residues 7-23 (LATFSVLVLFYKLFTYS). An FAD-binding FR-type domain is found at 40 to 144 (TEFREFELVE…SGPRGFYEYV (105 aa)). FAD contacts are provided by residues 124–139 (GDMK…GPRG) and 150–182 (HLAM…RVTL).

This sequence belongs to the flavoprotein pyridine nucleotide cytochrome reductase family. In terms of assembly, monomer. Component of the 2-(3-amino-3-carboxypropyl)histidine synthase complex composed of DPH1, DPH2, DPH3 and a NADH-dependent reductase, predominantly CBR1. Requires FAD as cofactor.

The protein resides in the mitochondrion outer membrane. It carries out the reaction 2 Fe(III)-[cytochrome b5] + NADH = 2 Fe(II)-[cytochrome b5] + NAD(+) + H(+). The enzyme catalyses 2 Fe(3+)-[Dph3] + NADH = 2 Fe(2+)-[Dph3] + NAD(+) + H(+). It participates in protein modification; peptidyl-diphthamide biosynthesis. In terms of biological role, NADH-dependent reductase for DPH3 and cytochrome b5. Required for the first step of diphthamide biosynthesis, a post-translational modification of histidine which occurs in elongation factor 2. DPH1 and DPH2 transfer a 3-amino-3-carboxypropyl (ACP) group from S-adenosyl-L-methionine (SAM) to a histidine residue, the reaction is assisted by a reduction system comprising DPH3 and a NADH-dependent reductase, predominantly CBR1. By reducing DPH3, also involved in the formation of the tRNA wobble base modification mcm5s 2U (5-methoxycarbonylmethyl-2-thiouridine), mediated by the elongator complex. The cytochrome b5/NADH cytochrome b5 reductase electron transfer system supports the catalytic activity of several sterol biosynthetic enzymes. In Candida glabrata (strain ATCC 2001 / BCRC 20586 / JCM 3761 / NBRC 0622 / NRRL Y-65 / CBS 138) (Yeast), this protein is NADH-cytochrome b5 reductase 1 (CBR1).